We begin with the raw amino-acid sequence, 645 residues long: Serine/threonine-protein kinase Nek11 (645 aa).

In terms of domain architecture, Protein kinase spans 29–287 (YVLQQKLGSG…AIEILKIPYL (259 aa)). ATP is bound by residues 35–43 (LGSGSFGTV) and Lys-61. Asp-158 serves as the catalytic Proton acceptor. Ser-273 carries the post-translational modification Phosphoserine; by CHEK1. Residues 346–385 (RLRKLQAADEKARKLKKIVEEKYEENSKRMQELRSRNFQQ) adopt a coiled-coil conformation. Residues 399–445 (GMEEKEEQPEGRLSCSPQDEDEERWQGREEESDEPTLENLPESQPIP) form a disordered region.

The protein belongs to the protein kinase superfamily. NEK Ser/Thr protein kinase family. NIMA subfamily. Interacts with isoform 1 of NEK2. Mn(2+) serves as cofactor. The cofactor is Mg(2+). Phosphorylated by NEK2. Phosphorylation at Ser-273 is important for its activation. In terms of tissue distribution, poorly expressed in cerebellum, trachea, lung, appendix, and uterus.

It is found in the nucleus. The protein resides in the nucleolus. It catalyses the reaction L-seryl-[protein] + ATP = O-phospho-L-seryl-[protein] + ADP + H(+). The enzyme catalyses L-threonyl-[protein] + ATP = O-phospho-L-threonyl-[protein] + ADP + H(+). Autorepressed by intramolecular binding of the C-terminus which dissociates following phosphorylation by NEK2 isoform 1 in G1/S-arrested cells. NEK2 isoform 2 is largely not present in the nucleolus, and does not appear to phosphorylate NEK11. Activated in response to DNA damage. Inhibited by zinc. In terms of biological role, protein kinase which plays an important role in the G2/M checkpoint response to DNA damage. Controls degradation of CDC25A by directly phosphorylating it on residues whose phosphorylation is required for BTRC-mediated polyubiquitination and degradation. The sequence is that of Serine/threonine-protein kinase Nek11 from Homo sapiens (Human).